We begin with the raw amino-acid sequence, 83 residues long: UPF0512 protein I (83 aa).

The protein belongs to the UPF0512 family.

This chain is UPF0512 protein I, found in Dictyostelium discoideum (Social amoeba).